We begin with the raw amino-acid sequence, 246 residues long: DNA repair protein RecO (246 aa).

The protein belongs to the RecO family.

In terms of biological role, involved in DNA repair and RecF pathway recombination. The protein is DNA repair protein RecO of Marinobacter nauticus (strain ATCC 700491 / DSM 11845 / VT8) (Marinobacter aquaeolei).